A 164-amino-acid polypeptide reads, in one-letter code: Photosystem II extrinsic protein V (164 aa).

An N-terminal signal peptide occupies residues 1–27 (MIPNRKIQLSLFAVIIVFETLLNQVYA). 4 residues coordinate heme c: cysteine 64, cysteine 67, histidine 68, and methionine 131.

Belongs to the cytochrome c family. PsbV subfamily. In terms of assembly, PSII is composed of 1 copy each of membrane proteins PsbA, PsbB, PsbC, PsbD, PsbE, PsbF, PsbH, PsbI, PsbJ, PsbK, PsbL, PsbM, PsbT, PsbY, PsbZ, Psb30/Ycf12, at least 3 peripheral proteins of the oxygen-evolving complex and a large number of cofactors. It forms dimeric complexes. The extrinsic subunits in red algae are PsbO (OEC33), PsbQ', cytochrome c-550 and PsbU. Requires heme c as cofactor.

Its subcellular location is the plastid. The protein localises to the chloroplast thylakoid membrane. In terms of biological role, one of the extrinsic, lumenal subunits of photosystem II (PSII). PSII is a light-driven water plastoquinone oxidoreductase, using light energy to abstract electrons from H(2)O, generating a proton gradient subsequently used for ATP formation. The extrinsic proteins stabilize the structure of photosystem II oxygen-evolving complex (OEC), the ion environment of oxygen evolution and protect the OEC against heat-induced inactivation. This chain is Photosystem II extrinsic protein V, found in Gracilaria tenuistipitata var. liui (Red alga).